The primary structure comprises 155 residues: 3-hydroxyacyl-[acyl-carrier-protein] dehydratase FabZ (155 aa).

His61 is an active-site residue.

Belongs to the thioester dehydratase family. FabZ subfamily.

It is found in the cytoplasm. It catalyses the reaction a (3R)-hydroxyacyl-[ACP] = a (2E)-enoyl-[ACP] + H2O. Involved in unsaturated fatty acids biosynthesis. Catalyzes the dehydration of short chain beta-hydroxyacyl-ACPs and long chain saturated and unsaturated beta-hydroxyacyl-ACPs. The chain is 3-hydroxyacyl-[acyl-carrier-protein] dehydratase FabZ from Synechococcus elongatus (strain ATCC 33912 / PCC 7942 / FACHB-805) (Anacystis nidulans R2).